The primary structure comprises 166 residues: Interferon gamma (166 aa).

The signal sequence occupies residues 1–23; that stretch reads MKYTSYFLALLLCVLLGFSGSYG. Glutamine 24 bears the Pyrrolidone carboxylic acid mark. 2 N-linked (GlcNAc...) asparagine glycosylation sites follow: asparagine 39 and asparagine 106.

This sequence belongs to the type II (or gamma) interferon family. Homodimer. Interacts with IFNGR1 (via extracellular domain); this interaction promotes IFNGR1 dimerization. Released primarily from activated T lymphocytes.

Its subcellular location is the secreted. Its function is as follows. Type II interferon produced by immune cells such as T-cells and NK cells that plays crucial roles in antimicrobial, antiviral, and antitumor responses by activating effector immune cells and enhancing antigen presentation. Primarily signals through the JAK-STAT pathway after interaction with its receptor IFNGR1 to affect gene regulation. Upon IFNG binding, IFNGR1 intracellular domain opens out to allow association of downstream signaling components JAK2, JAK1 and STAT1, leading to STAT1 activation, nuclear translocation and transcription of IFNG-regulated genes. Many of the induced genes are transcription factors such as IRF1 that are able to further drive regulation of a next wave of transcription. Plays a role in class I antigen presentation pathway by inducing a replacement of catalytic proteasome subunits with immunoproteasome subunits. In turn, increases the quantity, quality, and repertoire of peptides for class I MHC loading. Increases the efficiency of peptide generation also by inducing the expression of activator PA28 that associates with the proteasome and alters its proteolytic cleavage preference. Up-regulates as well MHC II complexes on the cell surface by promoting expression of several key molecules such as cathepsins B/CTSB, H/CTSH, and L/CTSL. Participates in the regulation of hematopoietic stem cells during development and under homeostatic conditions by affecting their development, quiescence, and differentiation. This Bubalus carabanensis (Swamp type water buffalo) protein is Interferon gamma (IFNG).